The primary structure comprises 235 residues: uncharacterized protein (235 aa).

2 helical membrane passes run 167–187 (AFKL…LNEL) and 190–210 (LFAY…LLLW).

Its subcellular location is the membrane. This is an uncharacterized protein from Saccharomyces cerevisiae (strain ATCC 204508 / S288c) (Baker's yeast).